The primary structure comprises 467 residues: Glutamate--tRNA ligase (467 aa).

Positions 9–19 (PSPTGFLHIGG) match the 'HIGH' region motif. The short motif at 250–254 (KLSKR) is the 'KMSKS' region element. An ATP-binding site is contributed by Lys-253.

Belongs to the class-I aminoacyl-tRNA synthetase family. Glutamate--tRNA ligase type 1 subfamily. Monomer.

It is found in the cytoplasm. The enzyme catalyses tRNA(Glu) + L-glutamate + ATP = L-glutamyl-tRNA(Glu) + AMP + diphosphate. In terms of biological role, catalyzes the attachment of glutamate to tRNA(Glu) in a two-step reaction: glutamate is first activated by ATP to form Glu-AMP and then transferred to the acceptor end of tRNA(Glu). The protein is Glutamate--tRNA ligase of Mesomycoplasma hyopneumoniae (strain 7448) (Mycoplasma hyopneumoniae).